The chain runs to 407 residues: Protein COS9 (407 aa).

The next 3 membrane-spanning stretches (helical) occupy residues 75 to 95 (TWLLLLLLMWLPGFLSQIKSI), 98 to 118 (IFPFKLCILVSCLVGIFLPNI), and 261 to 281 (IFNLWLFPAFILFLACIYVSW).

Belongs to the DUP/COS family.

Its subcellular location is the membrane. The chain is Protein COS9 (COS9) from Saccharomyces cerevisiae (strain ATCC 204508 / S288c) (Baker's yeast).